The sequence spans 507 residues: ATP synthase subunit alpha (507 aa).

169-176 (GDRQTGKT) contributes to the ATP binding site.

The protein belongs to the ATPase alpha/beta chains family. In terms of assembly, F-type ATPases have 2 components, CF(1) - the catalytic core - and CF(0) - the membrane proton channel. CF(1) has five subunits: alpha(3), beta(3), gamma(1), delta(1), epsilon(1). CF(0) has three main subunits: a(1), b(2) and c(9-12). The alpha and beta chains form an alternating ring which encloses part of the gamma chain. CF(1) is attached to CF(0) by a central stalk formed by the gamma and epsilon chains, while a peripheral stalk is formed by the delta and b chains.

It is found in the cell inner membrane. It catalyses the reaction ATP + H2O + 4 H(+)(in) = ADP + phosphate + 5 H(+)(out). Produces ATP from ADP in the presence of a proton gradient across the membrane. The alpha chain is a regulatory subunit. This Magnetococcus marinus (strain ATCC BAA-1437 / JCM 17883 / MC-1) protein is ATP synthase subunit alpha.